Here is a 381-residue protein sequence, read N- to C-terminus: Pentraxin-related protein PTX3 (381 aa).

An N-terminal signal peptide occupies residues 1–17 (MHLLAILFCALWSAVLA). 2 coiled-coil regions span residues 74-101 (LQAT…SLAR) and 143-167 (EEAG…HAVQ). Disulfide bonds link Cys179–Cys357 and Cys210–Cys271. The Pentraxin (PTX) domain maps to 179 to 381 (CETAILFPMR…QPHGGAQYVS (203 aa)). Asn220 is a glycosylation site (N-linked (GlcNAc...) asparagine).

As to quaternary structure, homooctamer; disulfide-linked. Binds to C1q. (Microbial infection) Interacts with SARS coronavirus-2/SARS-CoV-2 Nucleoprotein and Spike protein homotrimer. In terms of processing, glycosylated.

Its subcellular location is the secreted. Plays a role in the regulation of innate resistance to pathogens, inflammatory reactions, possibly clearance of self-components and female fertility. The sequence is that of Pentraxin-related protein PTX3 from Homo sapiens (Human).